The following is a 404-amino-acid chain: Triose phosphate/phosphate translocator, chloroplastic (404 aa).

Residues 1-74 (MESRVLSRTT…GPVCSRREKT (74 aa)) constitute a chloroplast transit peptide. The Chloroplast intermembrane segment spans residues 75-98 (AVQPCRAASGSSGEAKTGFLEKYP). A helical membrane pass occupies residues 99 to 119 (ALVTGSFFFMWYFLNVIFNIL). Topologically, residues 120 to 131 (NKKIYNYFPYPY) are lumenal. Residues 132-152 (FVSVIHLFVGVVYCLASWSVG) traverse the membrane as a helical segment. The Chloroplast intermembrane segment spans residues 153–209 (LPKRAPMDSKLLKLLIPVAVCHAIGHVTSNVSFAAVAVSFTHTIKALEPFFNAAASQ). Residues 210–230 (FVLGQSIPITLWLSLAPVVIG) form a helical membrane-spanning segment. The Lumenal portion of the chain corresponds to 231-274 (VSMASLTELSFNWLGFISAMISNVSFTYRSLYSKKAMTDMDSTN). The helical transmembrane segment at 275 to 294 (IYAYISIIALFVCLPPAIIV) threads the bilayer. Residues 295–372 (EGPQLMKHGF…IAFGNKISTQ (78 aa)) are Chloroplast intermembrane-facing. Residues 373–393 (TAIGTSIAIAGVALYSLIKAK) traverse the membrane as a helical segment. The Lumenal segment spans residues 394 to 404 (MEEEKRQMKST).

Belongs to the TPT transporter family. TPT (TC 2.A.7.9) subfamily. In terms of processing, the N-terminus is blocked.

The protein resides in the plastid. It localises to the chloroplast membrane. Its function is as follows. Mediates the export of fixed carbons from the chloroplasts into the cytosol in the form of triose phosphates. In Spinacia oleracea (Spinach), this protein is Triose phosphate/phosphate translocator, chloroplastic.